The sequence spans 196 residues: 7-methyl-GTP pyrophosphatase (196 aa).

Catalysis depends on aspartate 72, which acts as the Proton acceptor.

This sequence belongs to the Maf family. YceF subfamily. Requires a divalent metal cation as cofactor.

The protein resides in the cytoplasm. It carries out the reaction N(7)-methyl-GTP + H2O = N(7)-methyl-GMP + diphosphate + H(+). Nucleoside triphosphate pyrophosphatase that hydrolyzes 7-methyl-GTP (m(7)GTP). May have a dual role in cell division arrest and in preventing the incorporation of modified nucleotides into cellular nucleic acids. The polypeptide is 7-methyl-GTP pyrophosphatase (Neisseria meningitidis serogroup A / serotype 4A (strain DSM 15465 / Z2491)).